The following is a 338-amino-acid chain: Anthranilate phosphoribosyltransferase (338 aa).

5-phospho-alpha-D-ribose 1-diphosphate-binding positions include G81, 84–85, T89, 91–94, 109–117, and S121; these read GD, NIST, and KHGNRGVSS. G81 is an anthranilate binding site. S93 contacts Mg(2+). N112 contributes to the anthranilate binding site. R167 is a binding site for anthranilate. Mg(2+) contacts are provided by D225 and E226.

It belongs to the anthranilate phosphoribosyltransferase family. Homodimer. Mg(2+) serves as cofactor.

The enzyme catalyses N-(5-phospho-beta-D-ribosyl)anthranilate + diphosphate = 5-phospho-alpha-D-ribose 1-diphosphate + anthranilate. Its pathway is amino-acid biosynthesis; L-tryptophan biosynthesis; L-tryptophan from chorismate: step 2/5. Catalyzes the transfer of the phosphoribosyl group of 5-phosphorylribose-1-pyrophosphate (PRPP) to anthranilate to yield N-(5'-phosphoribosyl)-anthranilate (PRA). The polypeptide is Anthranilate phosphoribosyltransferase (Methanoculleus marisnigri (strain ATCC 35101 / DSM 1498 / JR1)).